The primary structure comprises 201 residues: MELVIKDVPSLLSVSEIIFGRDFNEALIHQVVVAYSASTRQGTRAQKSRADVSGSGRKPWRQKGTGRARAGSFRSPIWRSGGVTFASKPQSHSQKINKKMYRGALKSIFSELIRQKRLIIFEKFSLDLPKTNLLVKKLKEIKLNNVLILTKEIENNLFLASRNLYSVDVKDVCSMDPVSLIAFEHIIITVAALKKVEEMLS.

The interval 44 to 68 (RAQKSRADVSGSGRKPWRQKGTGRA) is disordered.

The protein belongs to the universal ribosomal protein uL4 family. Part of the 50S ribosomal subunit.

Functionally, one of the primary rRNA binding proteins, this protein initially binds near the 5'-end of the 23S rRNA. It is important during the early stages of 50S assembly. It makes multiple contacts with different domains of the 23S rRNA in the assembled 50S subunit and ribosome. In terms of biological role, forms part of the polypeptide exit tunnel. The sequence is that of Large ribosomal subunit protein uL4 from Buchnera aphidicola subsp. Schizaphis graminum (strain Sg).